Consider the following 1389-residue polypeptide: CRISPR-associated endoribonuclease Cas13a (1389 aa).

Residues 1–347 are NTD; the sequence is MGNLFGHKRW…DKHEKFKIER (347 aa). A crRNA-binding site is contributed by arginine 219. Binds crRNA stretches follow at residues 330 to 342, 405 to 408, and 432 to 436; these read YIKS…KHEK, KKHY, and YRYLK. Positions 348 to 498 are helical-1; that stretch reads ENKKDKIVKF…KLRHNDIDMT (151 aa). Active-site for pre-crRNA processing residues include arginine 438 and lysine 441. Residue lysine 441 participates in crRNA binding. Residues 471-475 form a binds crRNA region; it reads KILKR. Lysine 489 provides a ligand contact to crRNA. Positions 499–636 are HEPN-like fold 1-I; that stretch reads TVNTDDFSRL…LKISDEEVSK (138 aa). A binds crRNA region spans residues 502–509; it reads TDDFSRLH. Active-site for target ssRNA cleavage residues include arginine 597 and histidine 602. Positions 637–828 are helical-2; sequence ALNLDVVFKD…ERITVKTSDK (192 aa). Residue glutamine 759 coordinates crRNA. Positions 829 to 899 are HEPN-like fold 1-II; the sequence is TIVINDDFEY…ECITENWNLN (71 aa). Positions 853 to 858 are binds crRNA; the sequence is NKIRNR. A crRNA-binding site is contributed by tryptophan 865. Coiled-coil stretches lie at residues 893 to 920, 968 to 1046, and 1101 to 1131; these read TENW…FKIQ, EIDK…FQEI, and KNKI…KYIK. Positions 900 to 1170 are linker; that stretch reads LEEFIQKMKE…EYKKIRDLVE (271 aa). Residues 1170-1290 are HEPN-like fold 2; it reads EFNYLNKIES…ISHFYIVRNP (121 aa). Catalysis depends on for target ssRNA cleavage residues arginine 1278 and histidine 1283. Binds crRNA regions lie at residues 1311–1316 and 1338–1339; these read TRYNNS and KK.

It belongs to the CRISPR-associated endoribonuclease Cas13a family. Monomer. Mg(2+) serves as cofactor.

Its activity is regulated as follows. RNase activity on target is decreased by EDTA. Target RNA acts as an activator for non-specific ssRNA degradation. In terms of biological role, CRISPR (clustered regularly interspaced short palindromic repeat), is an adaptive immune system that provides protection against mobile genetic elements (viruses, transposable elements and conjugative plasmids). CRISPR clusters contain sequences complementary to antecedent mobile elements (spacers) and target invading nucleic acids. Unlike many single-component effectors, this CRISPR-Cas system targets RNA. CRISPR clusters are transcribed from pre-CRISPR RNA (crRNA) and processed into crRNA (optimally 28 nucleotides in this system) by this protein. This protein processes pre-crRNA at a 'non-typical' site 1 nucleotide upstream of the pre-crRNA stem-loop; it cleaves pre-crRNA from L.buccalis and L.wadei in a similar fashion, whereas the enzymes from the latter 2 bacteria cleave their own pre-crRNA 3 nt further upstream. When the appropriate target sequences are cloned into the CRISPR array, confers immunity to ssRNA(+) enterobacteria phage MS2. Cleaves linear target ssRNA in a crRNA-dependent fashion, preferentially before U residues; has no activity on partially dsRNA, ssDNA or dsDNA. RNA secondary structure surrounding the target influence the cleavage site and efficiency; unlike other CRISPR-Cas effectors Cas13a cleaves outside of the crRNA binding site. In the presence of a viable RNA target other RNAs are also degraded (called collateral RNA degradation), suggesting this type of CRISPR-Cas might also prevent viral spread by inducing programmed cell death or dormancy. This system has a 3' protospacer flanking site (PFS), it does not cleave when the 3' PFS is G (PFS is equivalent to PAM, the protospacer adjacent motif). Mutations of its active site residues results in an RNA-programmed RNA-binding protein. This Leptotrichia shahii (strain DSM 19757 / CCUG 47503 / CIP 107916 / JCM 16776 / LB37) protein is CRISPR-associated endoribonuclease Cas13a.